A 351-amino-acid polypeptide reads, in one-letter code: sn-glycerol-3-phosphate import ATP-binding protein UgpC (351 aa).

The region spanning 4-234 (ITLDNLVKAY…PATTFVAGFI (231 aa)) is the ABC transporter domain. 36-43 (GPSGCGKS) is a binding site for ATP.

Belongs to the ABC transporter superfamily. sn-glycerol-3-phosphate importer (TC 3.A.1.1.3) family. In terms of assembly, the complex is composed of two ATP-binding proteins (UgpC), two transmembrane proteins (UgpA and UgpE) and a solute-binding protein (UgpB).

Its subcellular location is the cell inner membrane. The enzyme catalyses sn-glycerol 3-phosphate(out) + ATP + H2O = sn-glycerol 3-phosphate(in) + ADP + phosphate + H(+). Its function is as follows. Part of the ABC transporter complex UgpBAEC involved in sn-glycerol-3-phosphate (G3P) import. Responsible for energy coupling to the transport system. The chain is sn-glycerol-3-phosphate import ATP-binding protein UgpC from Ruegeria pomeroyi (strain ATCC 700808 / DSM 15171 / DSS-3) (Silicibacter pomeroyi).